The chain runs to 299 residues: Transcription factor BHLH148 (299 aa).

The tract at residues Arg90 to Ser127 is disordered. Acidic residues predominate over residues Glu102 to Glu111. The segment at Ser127 to Arg140 is basic motif; degenerate. Positions Ser127–Leu176 constitute a bHLH domain. A helix-loop-helix motif region spans residues Glu141–Leu176. Residues Glu273 to Phe299 are disordered. Over residues Gly288–Phe299 the composition is skewed to polar residues.

This sequence belongs to the bHLH protein family. Interacts with TIFY10A/JAZ6, TIFY10B/JAZ7, TIFY11A/JAZ9, TIFY11C/JAZ11, and TIFY11D/JAZ12.

The protein localises to the nucleus. In terms of biological role, may act on an initial response of jasmonate-regulated gene expression toward drought tolerance as part of a BHLH148-TIFY11D/JAZ12-COI1A complex. The protein is Transcription factor BHLH148 of Oryza sativa subsp. japonica (Rice).